The sequence spans 133 residues: Cytochrome c-type biogenesis protein CcmE (133 aa).

The Cytoplasmic segment spans residues 1–7 (MKKKHKR). A helical; Signal-anchor for type II membrane protein membrane pass occupies residues 8–28 (LLITSGIFCFLSCIVFFILTT). Over 29-133 (LKENISFFYT…YMPKVLKQIP (105 aa)) the chain is Periplasmic. The heme site is built by histidine 120 and tyrosine 124.

The protein belongs to the CcmE/CycJ family.

Its subcellular location is the cell inner membrane. Heme chaperone required for the biogenesis of c-type cytochromes. Transiently binds heme delivered by CcmC and transfers the heme to apo-cytochromes in a process facilitated by CcmF and CcmH. The sequence is that of Cytochrome c-type biogenesis protein CcmE from Wolbachia sp. subsp. Drosophila simulans (strain wRi).